Reading from the N-terminus, the 183-residue chain is Capsid protein (183 aa).

The segment at 136 to 183 (NAPILSTLPETTVVRRRGRSPRRRTPSPRRRRSQSPRRRRSQSRESQC) is disordered. The span at 149 to 176 (VRRRGRSPRRRTPSPRRRRSQSPRRRRS) shows a compositional bias: basic residues. 3 positions are modified to phosphoserine; by host: S155, S162, and S170. Residues 155-161 (SPRRRTP) form a 1; half-length repeat. The segment at 155–177 (SPRRRTPSPRRRRSQSPRRRRSQ) is 3 X 8 AA repeats of S-P-R-R-R-[PR]-S-Q. The Bipartite nuclear localization signal signature appears at 158 to 175 (RRTPSPRRRRSQSPRRRR). A run of 2 repeats spans residues 162–169 (SPRRRRSQ) and 170–177 (SPRRRRSQ). The tract at residues 177 to 183 (QSRESQC) is RNA binding.

The protein belongs to the orthohepadnavirus core antigen family. In terms of assembly, homodimerizes, then multimerizes. Interacts with cytosol exposed regions of viral L glycoprotein present in the reticulum-to-Golgi compartment. Interacts with human FLNB. Phosphorylated form interacts with host importin alpha; this interaction depends on the exposure of the NLS, which itself depends upon genome maturation and/or phosphorylation of the capsid protein. Interacts with host NUP153. Post-translationally, phosphorylated by host SRPK1, SRPK2, and maybe protein kinase C or GAPDH. Phosphorylation is critical for pregenomic RNA packaging. Protein kinase C phosphorylation is stimulated by HBx protein and may play a role in transport of the viral genome to the nucleus at the late step during the viral replication cycle.

It is found in the virion. It localises to the host cytoplasm. In terms of biological role, self assembles to form an icosahedral capsid. Most capsids appear to be large particles with an icosahedral symmetry of T=4 and consist of 240 copies of capsid protein, though a fraction forms smaller T=3 particles consisting of 180 capsid proteins. Entering capsids are transported along microtubules to the nucleus. Phosphorylation of the capsid is thought to induce exposure of nuclear localization signal in the C-terminal portion of the capsid protein that allows binding to the nuclear pore complex via the importin (karyopherin-) alpha and beta. Capsids are imported in intact form through the nuclear pore into the nuclear basket, where it probably binds NUP153. Only capsids that contain the mature viral genome can release the viral DNA and capsid protein into the nucleoplasm. Immature capsids get stuck in the basket. Capsids encapsulate the pre-genomic RNA and the P protein. Pre-genomic RNA is reverse-transcribed into DNA while the capsid is still in the cytoplasm. The capsid can then either be directed to the nucleus, providing more genomes for transcription, or bud through the endoplasmic reticulum to provide new virions. This chain is Capsid protein, found in Hepatitis B virus genotype D subtype ayw (isolate Italy/CI/1992) (HBV-D).